The following is a 291-amino-acid chain: Protease HtpX homolog (291 aa).

A run of 2 helical transmembrane segments spans residues 4-24 (IALF…VASL) and 38-58 (LGAL…ISLL). His-144 contacts Zn(2+). Glu-145 is an active-site residue. Residue His-148 coordinates Zn(2+). 2 helical membrane passes run 159-179 (LIQG…GYAV) and 199-219 (VTTI…VAWF). Glu-224 serves as a coordination point for Zn(2+).

It belongs to the peptidase M48B family. Zn(2+) serves as cofactor.

It localises to the cell inner membrane. The protein is Protease HtpX homolog of Paracidovorax citrulli (strain AAC00-1) (Acidovorax citrulli).